We begin with the raw amino-acid sequence, 435 residues long: Probable alpha-galactosidase B (435 aa).

The first 18 residues, 1-18 (MLTSLSLTALALLPSANA), serve as a signal peptide directing secretion. Cys41 and Cys73 are joined by a disulfide. An N-linked (GlcNAc...) asparagine glycan is attached at Asn81. An intrachain disulfide couples Cys123 to Cys153. Catalysis depends on Asp151, which acts as the Nucleophile. 2 N-linked (GlcNAc...) asparagine glycosylation sites follow: Asn158 and Asn176. 221 to 225 (DWGQA) is a substrate binding site. Residue Asn232 is glycosylated (N-linked (GlcNAc...) asparagine). The Proton donor role is filled by Asp243. Asn378 carries an N-linked (GlcNAc...) asparagine glycan.

The protein belongs to the glycosyl hydrolase 27 family.

Its subcellular location is the secreted. The enzyme catalyses Hydrolysis of terminal, non-reducing alpha-D-galactose residues in alpha-D-galactosides, including galactose oligosaccharides, galactomannans and galactolipids.. In terms of biological role, hydrolyzes a variety of simple alpha-D-galactoside as well as more complex molecules such as oligosaccharides and polysaccharides. This chain is Probable alpha-galactosidase B (agl1), found in Penicillium simplicissimum.